The primary structure comprises 389 residues: S-adenosylmethionine synthase 2 (389 aa).

His-17 contributes to the ATP binding site. Residue Asp-19 participates in Mg(2+) binding. Glu-45 provides a ligand contact to K(+). 2 residues coordinate L-methionine: Glu-58 and Gln-102. The tract at residues 102–112 (QSADIAVGVDA) is flexible loop. ATP-binding positions include 166–168 (DSK), 231–232 (RF), Asp-240, 246–247 (RK), Ala-263, and Lys-267. Residue Asp-240 coordinates L-methionine. Lys-271 contributes to the L-methionine binding site.

It belongs to the AdoMet synthase family. As to quaternary structure, homotetramer; dimer of dimers. Mg(2+) is required as a cofactor. Requires K(+) as cofactor.

Its subcellular location is the cytoplasm. The catalysed reaction is L-methionine + ATP + H2O = S-adenosyl-L-methionine + phosphate + diphosphate. The protein operates within amino-acid biosynthesis; S-adenosyl-L-methionine biosynthesis; S-adenosyl-L-methionine from L-methionine: step 1/1. Its function is as follows. Catalyzes the formation of S-adenosylmethionine (AdoMet) from methionine and ATP. The overall synthetic reaction is composed of two sequential steps, AdoMet formation and the subsequent tripolyphosphate hydrolysis which occurs prior to release of AdoMet from the enzyme. This Rhodospirillum rubrum (strain ATCC 11170 / ATH 1.1.1 / DSM 467 / LMG 4362 / NCIMB 8255 / S1) protein is S-adenosylmethionine synthase 2.